A 123-amino-acid chain; its full sequence is Small ribosomal subunit protein uS12 (123 aa).

Residues 1–25 (MPTINQLIRKRRKSSLARKKSPALQ) are disordered. A compositionally biased stretch (basic residues) spans 8–21 (IRKRRKSSLARKKS). At Asp89 the chain carries 3-methylthioaspartic acid.

This sequence belongs to the universal ribosomal protein uS12 family. Part of the 30S ribosomal subunit. Contacts proteins S8 and S17. May interact with IF1 in the 30S initiation complex.

With S4 and S5 plays an important role in translational accuracy. Its function is as follows. Interacts with and stabilizes bases of the 16S rRNA that are involved in tRNA selection in the A site and with the mRNA backbone. Located at the interface of the 30S and 50S subunits, it traverses the body of the 30S subunit contacting proteins on the other side and probably holding the rRNA structure together. The combined cluster of proteins S8, S12 and S17 appears to hold together the shoulder and platform of the 30S subunit. This Chlamydia pneumoniae (Chlamydophila pneumoniae) protein is Small ribosomal subunit protein uS12.